Reading from the N-terminus, the 127-residue chain is Large-conductance mechanosensitive channel (127 aa).

The next 3 membrane-spanning stretches (helical) occupy residues 9–29 (EFAMRGNVMDLAVAVVMGVAF), 32–52 (IVTALVDGIIMPCVGLLLGGI), and 75–95 (VIDFIIVAFAIFVLIKLINLL).

Belongs to the MscL family. Homopentamer.

The protein resides in the cell inner membrane. Channel that opens in response to stretch forces in the membrane lipid bilayer. May participate in the regulation of osmotic pressure changes within the cell. In Legionella pneumophila subsp. pneumophila (strain Philadelphia 1 / ATCC 33152 / DSM 7513), this protein is Large-conductance mechanosensitive channel.